The following is a 177-amino-acid chain: Calcineurin subunit B (177 aa).

4 EF-hand domains span residues 25–60, 62–92, 94–129, and 135–170; these read KEIK…AVNP, VKRV…FNAQ, DKQR…MVGN, and QLQQ…QDLE. The Ca(2+) site is built by Asp38, Asp40, Asn42, Thr44, Glu49, Asp70, Asn72, Asp74, Ser76, Glu81, Asp107, Asp109, Asp111, Tyr113, Glu118, Asp148, Asp150, Asp152, Lys154, and Glu159.

Belongs to the calcineurin regulatory subunit family. In terms of assembly, composed of a catalytic subunit (A) and a regulatory subunit (B).

In terms of biological role, regulatory subunit of calcineurin, a calcium-dependent, calmodulin stimulated protein phosphatase. Confers calcium sensitivity. The polypeptide is Calcineurin subunit B (CNB1) (Naegleria gruberi (Amoeba)).